A 571-amino-acid chain; its full sequence is Protein tesmin/TSO1-like CXC 6 (571 aa).

Disordered regions lie at residues 1–52 (MGEG…AAAS), 92–119 (IRHP…QKKK), 293–325 (NQGT…GGNA), 370–411 (LANQ…RSLS), and 507–571 (NGVS…KKDL). Residues 7-16 (GDKFPPKTDE) are compositionally biased toward basic and acidic residues. The region spanning 117 to 241 (KKKQCNCKHS…KCLDCKNFEG (125 aa)) is the CRC domain. Composition is skewed to polar residues over residues 293-319 (NQGT…QTGS), 373-388 (QKET…QGHV), and 508-539 (GVSQ…QTAK). The segment covering 540–557 (QPSQLTTTTTTPNTSSQT) has biased composition (low complexity).

Belongs to the lin-54 family. In terms of tissue distribution, ubiquitous but expressed mostly in flowers.

Its subcellular location is the nucleus. Plays a role in development of both male and female reproductive tissues. In Arabidopsis thaliana (Mouse-ear cress), this protein is Protein tesmin/TSO1-like CXC 6 (TCX6).